Here is a 124-residue protein sequence, read N- to C-terminus: WAP four-disulfide core domain protein 2 (124 aa).

The N-terminal stretch at 1–27 (MPACRPGPLAGALLLGLLLLGLPRVPG) is a signal peptide. WAP domains are found at residues 29-73 (EVEK…CHLP) and 74-123 (NEKE…VTPI). Disulfide bonds link Cys-36-Cys-62, Cys-45-Cys-66, Cys-49-Cys-61, Cys-55-Cys-70, Cys-80-Cys-110, Cys-93-Cys-114, Cys-97-Cys-109, and Cys-103-Cys-119. Asn-44 carries an N-linked (GlcNAc...) asparagine glycan.

In terms of assembly, homotrimer; disulfide-linked. In terms of tissue distribution, epididymis. Highest levels are found in the caput and proximal cauda regions. Lower levels in the distal cauda. Not detected in the efferent ducts.

It is found in the secreted. In terms of biological role, broad range protease inhibitor. Possible function in sperm maturation. This chain is WAP four-disulfide core domain protein 2 (WFDC2), found in Canis lupus familiaris (Dog).